Reading from the N-terminus, the 332-residue chain is Glyoxylate reductase (332 aa).

NADP(+) is bound by residues 155 to 158 and 236 to 238; these read MGRI and TSR. Active-site residues include arginine 238 and glutamate 267. The active-site Proton donor is histidine 286. Position 286-288 (286-288) interacts with NADP(+); that stretch reads HAA.

The protein belongs to the D-isomer specific 2-hydroxyacid dehydrogenase family. GyaR subfamily. As to quaternary structure, homodimer.

It is found in the cytoplasm. It catalyses the reaction glycolate + NAD(+) = glyoxylate + NADH + H(+). This is Glyoxylate reductase from Korarchaeum cryptofilum (strain OPF8).